We begin with the raw amino-acid sequence, 307 residues long: Heme A synthase (307 aa).

The Cytoplasmic portion of the chain corresponds to 1–8; that stretch reads MQHNRYLK. A helical membrane pass occupies residues 9-29; that stretch reads WFAVAATVGMLLILLGGALVT. Topologically, residues 30–56 are extracellular; sequence KTDSGLGCGRNWPDCNGSLIPKEITPE. The cysteines at positions 37 and 44 are disulfide-linked. Residues 57–77 traverse the membrane as a helical segment; it reads VLIEFSHRLVTGVVSISILVL. E60 is a catalytic residue. H63 is a heme o binding site. Residues 78-92 are Cytoplasmic-facing; that stretch reads TVWTWRKLGHIREVK. Residues 93–113 traverse the membrane as a helical segment; it reads LLGFLAMFFLIAQALIGAAQV. Topologically, residues 114–123 are extracellular; it reads LWGQGDFILA. Residues 124–144 form a helical membrane-spanning segment; it reads LHFGISLISFAAVLLLSMIVF. H125 lines the heme o pocket. Residues 145–161 are Cytoplasmic-facing; the sequence is EVDRKFDADNVFIGKKL. Residues 162-182 traverse the membrane as a helical segment; the sequence is RWHTIAVTIYSYLVVYTGALV. Topologically, residues 183–218 are extracellular; it reads RHTDSSLICPDWPFCYNETPLASPNNMYEWVQMGHR. A disulfide bridge links C191 with C197. Residue H217 participates in heme b binding. A helical transmembrane segment spans residues 219-239; that stretch reads LAVLIIFIWIAYITWHAVKEY. Topologically, residues 240 to 247 are cytoplasmic; the sequence is KNQRVVYY. Residues 248–268 form a helical membrane-spanning segment; that stretch reads GWIIAFTIVFLQVIAGMLVVL. The Extracellular portion of the chain corresponds to 269-276; the sequence is TKLNLTVA. A helical transmembrane segment spans residues 277–297; the sequence is LMHSLLISLLFGLLCYMIMLV. Heme b is bound at residue H279. Topologically, residues 298-307 are cytoplasmic; that stretch reads ARSNYNEKMK.

The protein belongs to the COX15/CtaA family. Type 1 subfamily. Interacts with CtaB. It depends on heme b as a cofactor.

The protein resides in the cell membrane. The enzyme catalyses Fe(II)-heme o + 2 A + H2O = Fe(II)-heme a + 2 AH2. Its pathway is porphyrin-containing compound metabolism; heme A biosynthesis; heme A from heme O: step 1/1. In terms of biological role, catalyzes the conversion of heme O to heme A by two successive hydroxylations of the methyl group at C8. The first hydroxylation forms heme I, the second hydroxylation results in an unstable dihydroxymethyl group, which spontaneously dehydrates, resulting in the formyl group of heme A. The chain is Heme A synthase from Lysinibacillus sphaericus (strain C3-41).